Consider the following 235-residue polypeptide: (5-formylfuran-3-yl)methyl phosphate synthase (235 aa).

K27 serves as the catalytic Schiff-base intermediate with substrate. Residue K85 is the Proton acceptor of the active site.

It belongs to the MfnB family.

The enzyme catalyses 2 D-glyceraldehyde 3-phosphate = 4-(hydroxymethyl)-2-furancarboxaldehyde phosphate + phosphate + 2 H2O. Its pathway is cofactor biosynthesis; methanofuran biosynthesis. Its function is as follows. Catalyzes the formation of 4-(hydroxymethyl)-2-furancarboxaldehyde phosphate (4-HFC-P) from two molecules of glyceraldehyde-3-P (GA-3-P). In Methanococcus aeolicus (strain ATCC BAA-1280 / DSM 17508 / OCM 812 / Nankai-3), this protein is (5-formylfuran-3-yl)methyl phosphate synthase.